Reading from the N-terminus, the 345-residue chain is Phosphate acyltransferase (345 aa).

Belongs to the PlsX family. Homodimer. Probably interacts with PlsY.

Its subcellular location is the cytoplasm. The enzyme catalyses a fatty acyl-[ACP] + phosphate = an acyl phosphate + holo-[ACP]. The protein operates within lipid metabolism; phospholipid metabolism. Its function is as follows. Catalyzes the reversible formation of acyl-phosphate (acyl-PO(4)) from acyl-[acyl-carrier-protein] (acyl-ACP). This enzyme utilizes acyl-ACP as fatty acyl donor, but not acyl-CoA. In Nitratidesulfovibrio vulgaris (strain ATCC 29579 / DSM 644 / CCUG 34227 / NCIMB 8303 / VKM B-1760 / Hildenborough) (Desulfovibrio vulgaris), this protein is Phosphate acyltransferase.